A 445-amino-acid chain; its full sequence is Exodeoxyribonuclease 7 large subunit (445 aa).

Belongs to the XseA family. Heterooligomer composed of large and small subunits.

The protein localises to the cytoplasm. The catalysed reaction is Exonucleolytic cleavage in either 5'- to 3'- or 3'- to 5'-direction to yield nucleoside 5'-phosphates.. Bidirectionally degrades single-stranded DNA into large acid-insoluble oligonucleotides, which are then degraded further into small acid-soluble oligonucleotides. In Nautilia profundicola (strain ATCC BAA-1463 / DSM 18972 / AmH), this protein is Exodeoxyribonuclease 7 large subunit.